We begin with the raw amino-acid sequence, 272 residues long: ATP synthase subunit a (272 aa).

A run of 6 helical transmembrane segments spans residues 42–62, 108–128, 140–162, 177–197, 219–239, and 241–261; these read IDSL…AGFV, FVWI…LPCI, ILPS…LMIF, LIYH…LEII, LIFI…LSVP, and AIFH…LTII.

Belongs to the ATPase A chain family. F-type ATPases have 2 components, CF(1) - the catalytic core - and CF(0) - the membrane proton channel. CF(1) has five subunits: alpha(3), beta(3), gamma(1), delta(1), epsilon(1). CF(0) has three main subunits: a(1), b(2) and c(9-12). The alpha and beta chains form an alternating ring which encloses part of the gamma chain. CF(1) is attached to CF(0) by a central stalk formed by the gamma and epsilon chains, while a peripheral stalk is formed by the delta and b chains.

The protein localises to the cell inner membrane. In terms of biological role, key component of the proton channel; it plays a direct role in the translocation of protons across the membrane. This is ATP synthase subunit a from Blochmanniella floridana.